A 133-amino-acid polypeptide reads, in one-letter code: MLYPICIEKVNDGYVVSVPDVPGCFSAGDTLSEAMLNAKEAISFHIEGMLEDDEELPKSNPIEQYINQPEYKDFIVTVVDVDLTHLMGKAEKINITVPALLLHRIDQFIATHPEYKNRSNFLSQLATNRLLSA.

This sequence to E.coli ydcQ.

This is an uncharacterized protein from Haemophilus phage HP1 (strain HP1c1) (Bacteriophage HP1).